The chain runs to 89 residues: DNA-directed RNA polymerase subunit omega (89 aa).

This sequence belongs to the RNA polymerase subunit omega family. In terms of assembly, the RNAP catalytic core consists of 2 alpha, 1 beta, 1 beta' and 1 omega subunit. When a sigma factor is associated with the core the holoenzyme is formed, which can initiate transcription.

The enzyme catalyses RNA(n) + a ribonucleoside 5'-triphosphate = RNA(n+1) + diphosphate. Its function is as follows. Promotes RNA polymerase assembly. Latches the N- and C-terminal regions of the beta' subunit thereby facilitating its interaction with the beta and alpha subunits. This is DNA-directed RNA polymerase subunit omega from Idiomarina loihiensis (strain ATCC BAA-735 / DSM 15497 / L2-TR).